A 419-amino-acid polypeptide reads, in one-letter code: Aminoacyltransferase FemB (419 aa).

The protein belongs to the FemABX family. In terms of assembly, homodimer. Interacts with FemA.

It localises to the cytoplasm. It catalyses the reaction MurNAc-L-Ala-D-isoglutaminyl-L-Lys-(N(6)-tri-Gly)-D-Ala-D-Ala-diphospho-di-trans,octa-cis-undecaprenyl-GlcNAc + 2 glycyl-tRNA(Gly) = MurNAc-L-Ala-D-isoglutaminyl-L-Lys-(N(6)-penta-Gly)-D-Ala-D-Ala-diphospho-di-trans,octa-cis-undecaprenyl-GlcNAc + 2 tRNA(Gly) + 2 H(+). Catalyzes the formation of the pentaglycine interpeptide bridge, which is characteristic of the S.aureus peptidoglycan. Adds glycines 4 and 5 of the pentaglycine bridge, using glycyl-tRNA(Gly) as donor. This is Aminoacyltransferase FemB (femB) from Staphylococcus aureus (strain bovine RF122 / ET3-1).